The following is a 752-amino-acid chain: uncharacterized protein (752 aa).

2 positions are modified to phosphoserine: S202 and S582. The tract at residues 596–752 is disordered; that stretch reads EEEKESVEVE…KTGEDGEIVL (157 aa). Composition is skewed to basic and acidic residues over residues 601 to 613 and 641 to 677; these read SVEV…KNDL and LKSE…HFEV. The segment covering 695–718 has biased composition (polar residues); it reads NNVAETILEVTSSPKSSENSQKQS. A phosphoserine mark is found at S707 and S738.

This is an uncharacterized protein from Schizosaccharomyces pombe (strain 972 / ATCC 24843) (Fission yeast).